The following is a 585-amino-acid chain: Aspartate--tRNA ligase (585 aa).

E169 is an L-aspartate binding site. Residues 193–196 form an aspartate region; sequence QLFK. Residue R215 participates in L-aspartate binding. ATP-binding positions include 215–217 and Q224; that span reads RDE. L-aspartate is bound at residue H443. Residue E478 coordinates ATP. R485 provides a ligand contact to L-aspartate. Residue 530 to 533 participates in ATP binding; the sequence is GLDR.

The protein belongs to the class-II aminoacyl-tRNA synthetase family. Type 1 subfamily. As to quaternary structure, homodimer.

The protein resides in the cytoplasm. The catalysed reaction is tRNA(Asp) + L-aspartate + ATP = L-aspartyl-tRNA(Asp) + AMP + diphosphate. Functionally, catalyzes the attachment of L-aspartate to tRNA(Asp) in a two-step reaction: L-aspartate is first activated by ATP to form Asp-AMP and then transferred to the acceptor end of tRNA(Asp). The chain is Aspartate--tRNA ligase from Pseudothermotoga lettingae (strain ATCC BAA-301 / DSM 14385 / NBRC 107922 / TMO) (Thermotoga lettingae).